The following is a 153-amino-acid chain: Small ribosomal subunit protein uS9 (153 aa).

A disordered region spans residues 122–153 (KKAGFLTRDPRSTERKKYGLKKARKAPQYSKR). Residues 129-138 (RDPRSTERKK) show a composition bias toward basic and acidic residues. Residues 139 to 153 (YGLKKARKAPQYSKR) are compositionally biased toward basic residues.

The protein belongs to the universal ribosomal protein uS9 family.

In Mycobacterium leprae (strain TN), this protein is Small ribosomal subunit protein uS9 (rpsI).